The following is a 236-amino-acid chain: Orotidine 5'-phosphate decarboxylase (236 aa).

Residues D16, K38, 65 to 74 (DLKLHDIGNT), T123, R184, Q193, G213, and R214 contribute to the substrate site. K67 acts as the Proton donor in catalysis.

This sequence belongs to the OMP decarboxylase family. Type 1 subfamily. In terms of assembly, homodimer.

It carries out the reaction orotidine 5'-phosphate + H(+) = UMP + CO2. Its pathway is pyrimidine metabolism; UMP biosynthesis via de novo pathway; UMP from orotate: step 2/2. Catalyzes the decarboxylation of orotidine 5'-monophosphate (OMP) to uridine 5'-monophosphate (UMP). This chain is Orotidine 5'-phosphate decarboxylase, found in Methylobacterium nodulans (strain LMG 21967 / CNCM I-2342 / ORS 2060).